We begin with the raw amino-acid sequence, 94 residues long: Neutrophil antibiotic peptide NP-1 (94 aa).

The N-terminal stretch at 1 to 19 is a signal peptide; it reads MRTLTLLTALLLLALHTQA. A propeptide spanning residues 20–62 is cleaved from the precursor; it reads KSPQGTAEEAPDQEQLVMEDQDISISFGGDKGTALQDADVKAG. Disulfide bonds link C65-C93, C67-C82, and C72-C92. A Phosphotyrosine modification is found at Y84.

Belongs to the alpha-defensin family. Highest expression in bone marrow and to a much lesser extent in small intestine.

The protein resides in the secreted. Functionally, active in vitro against S.aureus, fungi, Gram-positive and Gram-negative bacteria and to a lesser extent against an enveloped virus. This chain is Neutrophil antibiotic peptide NP-1, found in Rattus norvegicus (Rat).